The sequence spans 253 residues: Ubiquinone biosynthesis O-methyltransferase (253 aa).

Arg-45, Gly-76, Asp-97, and Met-140 together coordinate S-adenosyl-L-methionine.

The protein belongs to the methyltransferase superfamily. UbiG/COQ3 family.

The enzyme catalyses a 3-demethylubiquinol + S-adenosyl-L-methionine = a ubiquinol + S-adenosyl-L-homocysteine + H(+). The catalysed reaction is a 3-(all-trans-polyprenyl)benzene-1,2-diol + S-adenosyl-L-methionine = a 2-methoxy-6-(all-trans-polyprenyl)phenol + S-adenosyl-L-homocysteine + H(+). It functions in the pathway cofactor biosynthesis; ubiquinone biosynthesis. Functionally, O-methyltransferase that catalyzes the 2 O-methylation steps in the ubiquinone biosynthetic pathway. The sequence is that of Ubiquinone biosynthesis O-methyltransferase from Parvibaculum lavamentivorans (strain DS-1 / DSM 13023 / NCIMB 13966).